We begin with the raw amino-acid sequence, 434 residues long: V-type ATP synthase beta chain (434 aa).

This sequence belongs to the ATPase alpha/beta chains family.

In terms of biological role, produces ATP from ADP in the presence of a proton gradient across the membrane. The V-type beta chain is a regulatory subunit. The protein is V-type ATP synthase beta chain of Borrelia garinii subsp. bavariensis (strain ATCC BAA-2496 / DSM 23469 / PBi) (Borreliella bavariensis).